Here is a 762-residue protein sequence, read N- to C-terminus: Transcription factor kpeA (762 aa).

The interval 267 to 361 (FDHTSHGSQS…PLKPDQRKQA (95 aa)) is disordered. Low complexity predominate over residues 294–312 (KKPSSPTRSTGSSSSTSPP). A DNA-binding region (zn(2)-C6 fungal-type) is located at residues 370 to 401 (CLRCKFLKKTCDKGEPCAGCQPSHARLWQVPC).

The protein resides in the nucleus. In terms of biological role, transcription factor that regulates conidiation as well as kojic acid production, likely by negatively controlling kojR and kojA expression. This Aspergillus oryzae (strain ATCC 42149 / RIB 40) (Yellow koji mold) protein is Transcription factor kpeA.